The following is a 497-amino-acid chain: ADP-dependent glucokinase (497 aa).

The signal sequence occupies residues 1–22 (MALWRGSAYAGFLALAVGCVFL). Positions 52–497 (SPEGRLAAAW…LFYSEVHPHY (446 aa)) constitute an ADPK domain. 3 residues coordinate Mg(2+): Glu297, Glu328, and Asp481. Asp481 acts as the Proton acceptor in catalysis.

Belongs to the ADP-dependent glucokinase family. As to quaternary structure, monomer. Mg(2+) is required as a cofactor.

It is found in the secreted. The enzyme catalyses D-glucose + ADP = D-glucose 6-phosphate + AMP + H(+). It participates in carbohydrate degradation; glycolysis. Functionally, catalyzes the phosphorylation of D-glucose to D-glucose 6-phosphate using ADP as the phosphate donor. GDP and CDP can replace ADP, but with reduced efficiency. The sequence is that of ADP-dependent glucokinase (ADPGK) from Homo sapiens (Human).